Consider the following 188-residue polypeptide: MGVDICHKYDRRVRRTKPKSKDVYLELLVKLYRFLTRRTNSKFNKIILKRLFMSKINRPPMAISKIVRFMKKPTREGRVAVIVGTIVDDPRMWTIPKLTVCALRVTDKARSRILKAGGEIITFDQLALRAPTGKNTVLMQGKRTGREANKHFGPAPGVPHSHTKAHVRSKGRQFERARGRRTSKGYKK.

Residues E147–K188 form a disordered region. Basic residues-rich tracts occupy residues S161–G171 and R178–K188.

The protein belongs to the eukaryotic ribosomal protein eL18 family.

The protein resides in the cytoplasm. The chain is Large ribosomal subunit protein eL18 (RpL18) from Diaphorina citri (Asian citrus psyllid).